Reading from the N-terminus, the 585-residue chain is Probable G-protein coupled receptor Mth-like 10 (585 aa).

Positions 1-32 (MPKKIHQPGGSLYCGVTLLGVLCLVVFRLIPG) are cleaved as a signal peptide. The Extracellular segment spans residues 33-250 (IPFGTYVMAE…DHSTVKIINS (218 aa)). 5 cysteine pairs are disulfide-bonded: Cys56-Cys110, Cys112-Cys117, Cys121-Cys216, Cys122-Cys135, and Cys177-Cys236. N-linked (GlcNAc...) asparagine glycans are attached at residues Asn63 and Asn72. 5 N-linked (GlcNAc...) asparagine glycosylation sites follow: Asn142, Asn152, Asn157, Asn198, and Asn223. A helical membrane pass occupies residues 251–271 (YAMMFSIPFMMLTIAVYLLIP). Residues 272–280 (ELRNQHGKS) are Cytoplasmic-facing. A helical transmembrane segment spans residues 281–301 (LVCYLIGLSVGYSSLCYVQLY). Topologically, residues 302–312 (QVDATGVTCKV) are extracellular. Residues 313-333 (FGYTAYFFFMGAYMWLSVISF) form a helical membrane-spanning segment. Residues 334 to 353 (DLWHNFRGTRGINRFQEKKR) are Cytoplasmic-facing. Residues 354-374 (FLFYSLYSWGIALVFLAFTYC) form a helical membrane-spanning segment. The Extracellular segment spans residues 375-404 (AQQLTNLPANLKPGIGDGVYCWLDMSNWAA). Residues 405–425 (MIYFYGPILAIVVANTIMFIM) traverse the membrane as a helical segment. Residues 426–466 (TAIKIHGVQREMARIIASENSTKNLRTEKDKRFYRAWSNYR) lie on the Cytoplasmic side of the membrane. Residues 467–487 (FGLFLRLFLIMGITWLTELIS) form a helical membrane-spanning segment. At 488-498 (YFVGSDKGWSK) the chain is on the extracellular side. A helical membrane pass occupies residues 499-519 (LFYISDLANAMQGFLIFMLFV). Topologically, residues 520–585 (MKKKVKHLIT…VDPQKTTIFR (66 aa)) are cytoplasmic.

The protein belongs to the G-protein coupled receptor 2 family. Mth subfamily.

The protein localises to the cell membrane. This Drosophila melanogaster (Fruit fly) protein is Probable G-protein coupled receptor Mth-like 10 (mthl10).